The following is a 251-amino-acid chain: Protein FAM216A (251 aa).

The tract at residues 1 to 41 is disordered; sequence MPSRWPGVAGPPALARTEGGEGSAGHSYPQNSKGTGEQHKA.

The protein belongs to the FAM216 family.

The protein is Protein FAM216A (Fam216a) of Mus musculus (Mouse).